Reading from the N-terminus, the 343-residue chain is Cytoplasmic tRNA 2-thiolation protein 1 (343 aa).

Belongs to the TtcA family. CTU1/NCS6/ATPBD3 subfamily.

It localises to the cytoplasm. Its pathway is tRNA modification; 5-methoxycarbonylmethyl-2-thiouridine-tRNA biosynthesis. Its function is as follows. Plays a central role in 2-thiolation of mcm(5)S(2)U at tRNA wobble positions of tRNA(Lys), tRNA(Glu) and tRNA(Gln). Directly binds tRNAs and probably acts by catalyzing adenylation of tRNAs, an intermediate required for 2-thiolation. It is unclear whether it acts as a sulfurtransferase that transfers sulfur from thiocarboxylated URM1 onto the uridine of tRNAs at wobble position. The chain is Cytoplasmic tRNA 2-thiolation protein 1 from Drosophila pseudoobscura pseudoobscura (Fruit fly).